Reading from the N-terminus, the 233-residue chain is Large ribosomal subunit protein uL1 (233 aa).

The protein belongs to the universal ribosomal protein uL1 family. In terms of assembly, part of the 50S ribosomal subunit.

Binds directly to 23S rRNA. The L1 stalk is quite mobile in the ribosome, and is involved in E site tRNA release. Functionally, protein L1 is also a translational repressor protein, it controls the translation of the L11 operon by binding to its mRNA. The polypeptide is Large ribosomal subunit protein uL1 (Geobacillus stearothermophilus (Bacillus stearothermophilus)).